A 177-amino-acid polypeptide reads, in one-letter code: Probable chemoreceptor glutamine deamidase CheD (177 aa).

This sequence belongs to the CheD family.

The catalysed reaction is L-glutaminyl-[protein] + H2O = L-glutamyl-[protein] + NH4(+). In terms of biological role, probably deamidates glutamine residues to glutamate on methyl-accepting chemotaxis receptors (MCPs), playing an important role in chemotaxis. The chain is Probable chemoreceptor glutamine deamidase CheD from Pseudomonas savastanoi pv. phaseolicola (strain 1448A / Race 6) (Pseudomonas syringae pv. phaseolicola (strain 1448A / Race 6)).